The sequence spans 555 residues: Urocanate hydratase (555 aa).

Residues 52–53, Q130, 176–178, E196, R201, 242–243, 263–267, 273–274, and Y322 each bind NAD(+); these read GG, GMG, NA, QTSAH, and YL. C410 is an active-site residue. G492 lines the NAD(+) pocket.

Belongs to the urocanase family. Requires NAD(+) as cofactor.

The protein resides in the cytoplasm. It catalyses the reaction 4-imidazolone-5-propanoate = trans-urocanate + H2O. It participates in amino-acid degradation; L-histidine degradation into L-glutamate; N-formimidoyl-L-glutamate from L-histidine: step 2/3. Its function is as follows. Catalyzes the conversion of urocanate to 4-imidazolone-5-propionate. This chain is Urocanate hydratase, found in Shewanella baltica (strain OS185).